The sequence spans 456 residues: Bifunctional protein GlmU (456 aa).

Residues 1 to 229 (MLNSAMSVVI…ISETDGVNNR (229 aa)) are pyrophosphorylase. UDP-N-acetyl-alpha-D-glucosamine is bound by residues 11-14 (LAAG), K25, Q76, 81-82 (GT), 103-105 (YGD), G140, E154, N169, and N227. D105 contacts Mg(2+). N227 is a binding site for Mg(2+). The segment at 230 to 250 (LQLSRLERIYQAEQAEKLLLS) is linker. The tract at residues 251–456 (GVMLRDPARF…QGWQRPVKKK (206 aa)) is N-acetyltransferase. Positions 333 and 351 each coordinate UDP-N-acetyl-alpha-D-glucosamine. The Proton acceptor role is filled by H363. UDP-N-acetyl-alpha-D-glucosamine-binding residues include Y366 and N377. Acetyl-CoA-binding positions include A380, 386–387 (NY), S405, A423, and R440.

The protein in the N-terminal section; belongs to the N-acetylglucosamine-1-phosphate uridyltransferase family. In the C-terminal section; belongs to the transferase hexapeptide repeat family. Homotrimer. Requires Mg(2+) as cofactor.

The protein resides in the cytoplasm. It carries out the reaction alpha-D-glucosamine 1-phosphate + acetyl-CoA = N-acetyl-alpha-D-glucosamine 1-phosphate + CoA + H(+). The catalysed reaction is N-acetyl-alpha-D-glucosamine 1-phosphate + UTP + H(+) = UDP-N-acetyl-alpha-D-glucosamine + diphosphate. The protein operates within nucleotide-sugar biosynthesis; UDP-N-acetyl-alpha-D-glucosamine biosynthesis; N-acetyl-alpha-D-glucosamine 1-phosphate from alpha-D-glucosamine 6-phosphate (route II): step 2/2. It participates in nucleotide-sugar biosynthesis; UDP-N-acetyl-alpha-D-glucosamine biosynthesis; UDP-N-acetyl-alpha-D-glucosamine from N-acetyl-alpha-D-glucosamine 1-phosphate: step 1/1. It functions in the pathway bacterial outer membrane biogenesis; LPS lipid A biosynthesis. Catalyzes the last two sequential reactions in the de novo biosynthetic pathway for UDP-N-acetylglucosamine (UDP-GlcNAc). The C-terminal domain catalyzes the transfer of acetyl group from acetyl coenzyme A to glucosamine-1-phosphate (GlcN-1-P) to produce N-acetylglucosamine-1-phosphate (GlcNAc-1-P), which is converted into UDP-GlcNAc by the transfer of uridine 5-monophosphate (from uridine 5-triphosphate), a reaction catalyzed by the N-terminal domain. This chain is Bifunctional protein GlmU, found in Salmonella typhi.